Here is a 371-residue protein sequence, read N- to C-terminus: tRNA (guanine(26)-N(2))-dimethyltransferase (371 aa).

The Trm1 methyltransferase domain occupies 1 to 370 (MDVSEGGVTV…GGLAEVEAAV (370 aa)). S-adenosyl-L-methionine-binding residues include arginine 36, arginine 66, aspartate 81, aspartate 107, and alanine 108. Residues cysteine 238, cysteine 241, cysteine 258, and cysteine 261 each contribute to the Zn(2+) site.

This sequence belongs to the class I-like SAM-binding methyltransferase superfamily. Trm1 family.

The enzyme catalyses guanosine(26) in tRNA + 2 S-adenosyl-L-methionine = N(2)-dimethylguanosine(26) in tRNA + 2 S-adenosyl-L-homocysteine + 2 H(+). Its function is as follows. Dimethylates a single guanine residue at position 26 of a number of tRNAs using S-adenosyl-L-methionine as donor of the methyl groups. This is tRNA (guanine(26)-N(2))-dimethyltransferase from Halobacterium salinarum (strain ATCC 700922 / JCM 11081 / NRC-1) (Halobacterium halobium).